Here is a 164-residue protein sequence, read N- to C-terminus: Transcriptional repressor NrdR (164 aa).

A zinc finger lies at 3 to 34; sequence CPFCRHDDTQVVDSRVSEDGAAIRRRRRCPAC. The 91-residue stretch at 49 to 139 folds into the ATP-cone domain; sequence PSVVKKDGSR…VYRRFEDVSE (91 aa).

It belongs to the NrdR family. It depends on Zn(2+) as a cofactor.

Negatively regulates transcription of bacterial ribonucleotide reductase nrd genes and operons by binding to NrdR-boxes. This is Transcriptional repressor NrdR from Paraburkholderia phymatum (strain DSM 17167 / CIP 108236 / LMG 21445 / STM815) (Burkholderia phymatum).